Consider the following 603-residue polypeptide: Adenine deaminase (603 aa).

It belongs to the metallo-dependent hydrolases superfamily. Adenine deaminase family. Mn(2+) is required as a cofactor.

The catalysed reaction is adenine + H2O + H(+) = hypoxanthine + NH4(+). The protein is Adenine deaminase of Ruegeria pomeroyi (strain ATCC 700808 / DSM 15171 / DSS-3) (Silicibacter pomeroyi).